A 559-amino-acid polypeptide reads, in one-letter code: SH3 domain-binding protein 2 (559 aa).

One can recognise a PH domain in the interval 26–130 (GVAKAGYLHK…WMAFVRREIG (105 aa)). Residues 164-449 (LSSYPMDNED…EDSDEDYEKV (286 aa)) are disordered. The span at 170 to 184 (DNEDYEHEDEDDSYL) shows a compositional bias: acidic residues. Residues Tyr-174 and Tyr-183 each carry the phosphotyrosine; by SYK modification. Residues 201–210 (PPAYPPPPVP) carry the SH3-binding motif. 2 stretches are compositionally biased toward pro residues: residues 202–213 (PAYPPPPVPVPR) and 233–242 (PLLPPPPPKR). Residues 252 to 265 (EDAKDALGLRRVEP) show a composition bias toward basic and acidic residues. Position 277 is a phosphoserine (Ser-277). The segment covering 313–327 (TSSVSSSTTMAVATS) has biased composition (low complexity). Basic and acidic residues predominate over residues 360-371 (KIAEEPSPREAA). Over residues 375–386 (PVPPVAPRPPVQ) the composition is skewed to pro residues. Phosphoserine is present on residues Ser-414 and Ser-425. Over residues 437–446 (TGEEDSDEDY) the composition is skewed to acidic residues. At Tyr-446 the chain carries Phosphotyrosine; by SYK. Residues 455–553 (VFVNTTESCE…HQSLLLRHPY (99 aa)) form the SH2 domain.

Phosphorylated. Phosphorylation at Tyr-446 may stimulate the activity of the LYN kinase.

Its function is as follows. Binds differentially to the SH3 domains of certain proteins of signal transduction pathways. Binds to phosphatidylinositols; linking the hemopoietic tyrosine kinase fes to the cytoplasmic membrane in a phosphorylation dependent mechanism. In Mus musculus (Mouse), this protein is SH3 domain-binding protein 2 (Sh3bp2).